A 268-amino-acid polypeptide reads, in one-letter code: Small ribosomal subunit protein uS2 (268 aa).

Residues 233–268 (SVREEEFAEAAAEGEEKPARRAPAKKAAKKGDDAQA) are disordered.

It belongs to the universal ribosomal protein uS2 family.

This chain is Small ribosomal subunit protein uS2, found in Stenotrophomonas maltophilia (strain K279a).